Consider the following 322-residue polypeptide: MRPPRTTELDRPMTTAASQRPRVPRRLLDGVLLLDKPVGLSSNDALIRAKRLLLAKKAGHTGTLDPLASGLLPLCFGEATKFSQDLLEADKTYEATMRLGQRTATGDAEGEVIDTRPVECDRAAVEAALVRFTGEIVQVPPMYSALKRDGKPLYEYARAGQTVEREGRNVTILALALLACDLPDVTFRVTCSKGTYVRTLAEDIGEALGCGAHLTMLRRTGVGALTLEHAVTLDALSDADDASRDAWLQPVDALLSTFPLVRLDETSAKRFLHGQRLPLSALDPIDAAEGERVRVYDATRLLGVARKANGVLAPERLVVTAA.

A compositionally biased stretch (basic and acidic residues) spans 1–11 (MRPPRTTELDR). The disordered stretch occupies residues 1–22 (MRPPRTTELDRPMTTAASQRPR). Asp-65 serves as the catalytic Nucleophile.

It belongs to the pseudouridine synthase TruB family. Type 1 subfamily.

It carries out the reaction uridine(55) in tRNA = pseudouridine(55) in tRNA. Responsible for synthesis of pseudouridine from uracil-55 in the psi GC loop of transfer RNAs. The chain is tRNA pseudouridine synthase B from Burkholderia lata (strain ATCC 17760 / DSM 23089 / LMG 22485 / NCIMB 9086 / R18194 / 383).